Reading from the N-terminus, the 1447-residue chain is Baculoviral IAP repeat-containing protein 1b (1447 aa).

3 BIR repeats span residues 60–127, 159–227, and 278–345; these read EAKR…CEFL, EEAR…CEFL, and EELR…CVFL. Zn(2+) is bound by residues Cys315, Cys318, His335, and Cys342. Residues 508–802 enclose the NACHT domain; it reads SVMCVEGEAG…EFLAAVRLTE (295 aa). Residue Lys520 coordinates ATP.

Component of the NLRC4 inflammasome, at least composed of NLRC4, caspase-1 (CASP1) and some NAIP protein. Interacts with S.typhimurium (Salmonella) PrgJ and B.thailandensis BsaK.

Functionally, sensor component of the NLRC4 inflammasome that specifically recognizes and binds type III secretion system (T3SS) rod proteins such as S.typhimurium (Salmonella) PrgJ and B.thailandensis BsaK from pathogenic bacteria. Association of pathogenic bacteria proteins drives in turn drive assembly and activation of the NLRC4 inflammasome, promoting caspase-1 activation, cytokine production and macrophage pyroptosis. The NLRC4 inflammasome is activated as part of the innate immune response to a range of intracellular bacteria. The NLRC4 inflammasome senses Gram-negative bacteria such as L.pneumophila and P.aeruginosa, enteric pathogens S.typhimurium (Salmonella) and S.flexneri. Prevents motor-neuron apoptosis induced by a variety of signals. The polypeptide is Baculoviral IAP repeat-containing protein 1b (Naip2) (Mus musculus (Mouse)).